Here is a 448-residue protein sequence, read N- to C-terminus: Glucan 1,3-beta-glucosidase I/II (448 aa).

The first 19 residues, 1 to 19, serve as a signal peptide directing secretion; sequence MLSLKTLLCTLLTVSSVLA. The propeptide occupies 20–40; it reads TPVPARDPSSIQFVHEENKKR. A glycan (N-linked (GlcNAc...) asparagine) is linked at asparagine 165. Glutamate 232 functions as the Proton donor in the catalytic mechanism. An N-linked (GlcNAc...) asparagine glycan is attached at asparagine 325. Glutamate 334 serves as the catalytic Nucleophile.

This sequence belongs to the glycosyl hydrolase 5 (cellulase A) family.

The protein localises to the secreted. Its subcellular location is the cell wall. The catalysed reaction is Successive hydrolysis of beta-D-glucose units from the non-reducing ends of (1-&gt;3)-beta-D-glucans, releasing alpha-glucose.. In terms of biological role, glucanases possibly play a role in cell expansion during growth, in cell-cell fusion during mating, and in spore release during sporulation. This enzyme hydrolyzes both 1,3-beta- and 1,6-beta-linkages and even has beta-glucosidase activity. It could also function biosynthetically as a transglycosylase. The polypeptide is Glucan 1,3-beta-glucosidase I/II (EXG1) (Saccharomyces cerevisiae (strain ATCC 204508 / S288c) (Baker's yeast)).